The primary structure comprises 406 residues: DNA primase large subunit PriL (406 aa).

Positions 302, 375, 384, and 389 each coordinate [4Fe-4S] cluster.

It belongs to the eukaryotic-type primase large subunit family. In terms of assembly, heterodimer of a small subunit (PriS) and a large subunit (PriL). Requires [4Fe-4S] cluster as cofactor.

Regulatory subunit of DNA primase, an RNA polymerase that catalyzes the synthesis of short RNA molecules used as primers for DNA polymerase during DNA replication. Stabilizes and modulates the activity of the small subunit, increasing the rate of DNA synthesis, and conferring RNA synthesis capability. The DNA polymerase activity may enable DNA primase to also catalyze primer extension after primer synthesis. May also play a role in DNA repair. The polypeptide is DNA primase large subunit PriL (Methanopyrus kandleri (strain AV19 / DSM 6324 / JCM 9639 / NBRC 100938)).